A 248-amino-acid chain; its full sequence is Killer cell lectin-like receptor subfamily I member 1 (248 aa).

Topologically, residues 1–80 are cytoplasmic; it reads MLHSKRREYT…RQGPKSTVWR (80 aa). Short sequence motifs (ITIM motif) lie at residues 16–21 and 47–52; these read VTYTEL and LKYGEL. The helical; Signal-anchor for type II membrane protein transmembrane segment at 81–101 threads the bilayer; sequence VVTGMLGALCVVLMTTTGILL. The Extracellular portion of the chain corresponds to 102 to 248; that stretch reads PKLFSSQEEQ…KKSYICEFNI (147 aa). Intrachain disulfides connect cysteine 132–cysteine 145, cysteine 161–cysteine 244, and cysteine 223–cysteine 236. The region spanning 139–245 is the C-type lectin domain; that stretch reads FGNNFYCVFK…CSAKKSYICE (107 aa). Asparagine 197, asparagine 214, and asparagine 220 each carry an N-linked (GlcNAc...) asparagine glycan.

Heterodimer with KLRE1. Interacts with PTPN6. Expressed in natural killer (NK) cells.

It is found in the cell membrane. Functionally, lectin-like receptor for natural killer (NK) cells. Heterodimer formation with KLRE1 mediates inhibition of NK cell cytolytic activity. The chain is Killer cell lectin-like receptor subfamily I member 1 from Mus musculus (Mouse).